The sequence spans 429 residues: 26S proteasome regulatory subunit RPN7 (429 aa).

Residues serine 8 and serine 77 each carry the phosphoserine modification. The TPR repeat unit spans residues 131–164; it reads AQAWINLGEYYAQIGDKDNAEKTLGKSLSKAIST. Residues 223-395 enclose the PCI domain; it reads NFKEAAKLLV…GIVETNRPDN (173 aa).

The 26S proteasome is composed of a core protease, known as the 20S proteasome, capped at one or both ends by the 19S regulatory complex (RC). The RC is composed of at least 18 different subunits in two subcomplexes, the base and the lid, which form the portions proximal and distal to the 20S proteolytic core, respectively. Component of the lid subcomplex of the 19S RC.

The protein resides in the nucleus. Functionally, component of the 19S cap proteasome complex which acts as a regulatory subunit of the 26S proteasome, involved in the ATP-dependent degradation of ubiquitinated proteins. This Saccharomyces cerevisiae (strain ATCC 204508 / S288c) (Baker's yeast) protein is 26S proteasome regulatory subunit RPN7.